A 261-amino-acid polypeptide reads, in one-letter code: Lipase LipV (261 aa).

Ser-87 (nucleophile) is an active-site residue. Residues Asp-217 and His-240 each act as charge relay system in the active site.

The protein belongs to the AB hydrolase superfamily.

It carries out the reaction a carboxylic ester + H2O = an alcohol + a carboxylate + H(+). The enzyme catalyses a tetradecanoate ester + H2O = an aliphatic alcohol + tetradecanoate + H(+). The catalysed reaction is decanoate ester + H2O = decanoate + an aliphatic alcohol + H(+). It catalyses the reaction an octanoate ester + H2O = an aliphatic alcohol + octanoate + H(+). It carries out the reaction a dodecanoate ester + H2O = an aliphatic alcohol + dodecanoate + H(+). The enzyme catalyses a butanoate ester + H2O = an aliphatic alcohol + butanoate + H(+). The catalysed reaction is hexadecanoate ester + H2O = an aliphatic alcohol + hexadecanoate + H(+). It catalyses the reaction octadecanoate ester + H2O = an aliphatic alcohol + octadecanoate + H(+). Is inhibited by tetrahydrolipstatin, a specific lipase inhibitor and RHC 80267, a diacylglycerol lipase inhibitor, but not by phenylglyoxal and iodoacetate. Functionally, lipase that displays broad substrate specificity and preferentially hydrolyzes p-nitrophenyl myristate in vitro. Also shows significant activity with pNP-butyrate (68%), pNP-octanoate (82%), pNP-decanoate (90%), and pNP-laurate (74%). Is probably involved in lipid catabolism. Is active at low pH, and might play some important role in mycobacterial biology in macrophages where the bacteria encounters acidic stress. The protein is Lipase LipV of Mycobacterium tuberculosis (strain ATCC 25618 / H37Rv).